The chain runs to 396 residues: Nucleolar protein 12 (396 aa).

Positions 43 to 104 (TDKDADGDEK…GKESKKSTKE (62 aa)) are disordered. The segment covering 47 to 58 (ADGDEKMEDAAS) has biased composition (acidic residues). Over residues 64–73 (KKPSKKKLAK) the composition is skewed to basic residues. The segment covering 87–104 (EPEKLVEEGKESKKSTKE) has biased composition (basic and acidic residues). 2 consecutive RRM domains span residues 112–220 (RTIF…SITH) and 228–312 (RSVF…RCKN). A disordered region spans residues 361-396 (TKDDSKPVLKKGKKERSKTGRVTKRSQAFKKSQQKK). Residues 368–396 (VLKKGKKERSKTGRVTKRSQAFKKSQQKK) show a composition bias toward basic residues.

The protein belongs to the RRM RBM34 family.

The protein localises to the nucleus. The protein resides in the nucleolus. Involved in pre-25S rRNA processing. The protein is Nucleolar protein 12 (NOP12) of Candida glabrata (strain ATCC 2001 / BCRC 20586 / JCM 3761 / NBRC 0622 / NRRL Y-65 / CBS 138) (Yeast).